The following is a 443-amino-acid chain: Exodeoxyribonuclease 7 large subunit (443 aa).

The protein belongs to the XseA family. As to quaternary structure, heterooligomer composed of large and small subunits.

The protein localises to the cytoplasm. It catalyses the reaction Exonucleolytic cleavage in either 5'- to 3'- or 3'- to 5'-direction to yield nucleoside 5'-phosphates.. In terms of biological role, bidirectionally degrades single-stranded DNA into large acid-insoluble oligonucleotides, which are then degraded further into small acid-soluble oligonucleotides. The chain is Exodeoxyribonuclease 7 large subunit from Vibrio parahaemolyticus serotype O3:K6 (strain RIMD 2210633).